The following is a 398-amino-acid chain: Cyclic GMP-AMP synthase-like receptor (398 aa).

ATP contacts are provided by residues Ser57 and 69-71 (EFD). Glu69, Asp71, and Asp192 together coordinate Mg(2+). Residues Asp192 and 240–247 (SLSFQEQE) each bind GTP. ATP contacts are provided by residues 244-247 (QEQE), Lys265, and 277-281 (SYYIK). Residues Ile288, Glu289, and Asp292 each coordinate Mn(2+).

This sequence belongs to the mab-21 family. Requires Mg(2+) as cofactor. Mn(2+) serves as cofactor.

The enzyme catalyses GTP + ATP = 2',3'-cGAMP + 2 diphosphate. It carries out the reaction GTP + ATP = pppGp(2'-5')A + diphosphate. The catalysed reaction is pppGp(2'-5')A = 2',3'-cGAMP + diphosphate. The enzyme activity is specifically activated by double-stranded RNA (dsRNA). In terms of biological role, nucleotidyltransferase that catalyzes the formation of cyclic GMP-AMP (2',3'-cGAMP) from ATP and GTP and plays a key role in innate immunity. Acts as a key sensor of double-stranded RNA (dsRNA), the presence of dsRNA in the cytoplasm being a danger signal that triggers the immune responses. Directly binds dsRNA, activating the nucleotidyltransferase activity, leading to synthesis of 2',3'-cGAMP, a second messenger that binds to and activates Sting, thereby triggering the antiviral immune response via activation of the NF-kappa-B transcription factor Rel (Relish). The chain is Cyclic GMP-AMP synthase-like receptor from Tribolium castaneum (Red flour beetle).